The following is a 343-amino-acid chain: Transmembrane protein 120A (343 aa).

Residues 1-132 lie on the Cytoplasmic side of the membrane; sequence MQPPPPGPLG…KQAKFAYKDE (132 aa). Lys-130 contributes to the CoA binding site. Residues 133-152 traverse the membrane as a helical segment; that stretch reads YEKFKLYLTIILILISFTCR. Over 153–158 the chain is Extracellular; it reads FLLNSR. A helical membrane pass occupies residues 159–177; that stretch reads VTDAAFNFLLVWYYCTLTI. At 178-190 the chain is on the cytoplasmic side; the sequence is RESILINNGSRIK. The CoA site is built by Ser-187 and Arg-188. A helical transmembrane segment spans residues 191–209; it reads GWWVFHHYVSTFLSGVMLT. The Extracellular portion of the chain corresponds to 210 to 218; that stretch reads WPDGLMYQK. Residues 219–240 form a helical membrane-spanning segment; sequence FRNQFLSFSMYQSFVQFLQYYY. Positions 237, 240, 241, and 283 each coordinate CoA. Over 241 to 270 the chain is Cytoplasmic; it reads QSGCLYRLRALGERHTMDLTVEGFQSWMWR. The chain crosses the membrane as a helical span at residues 271–294; the sequence is GLTFLLPFLFFGHFWQLFNALTLF. The Extracellular segment spans residues 295 to 304; that stretch reads NLAQDPQCKE. The chain crosses the membrane as a helical span at residues 305-330; it reads WQVLMCGFPFLLLFLGNFFTTLRVVH. At 331 to 343 the chain is on the cytoplasmic side; the sequence is HKFHSQRHGSKKD. CoA is bound at residue Lys-332.

Belongs to the TMEM120 family. As to quaternary structure, homodimer. Forms heterooligomer with TMEM120B. Interacts with PKD2; TMEM120A inhibits PKD2 channel activity through the physical association of PKD2 with TMEM120A. Interacts (via C-terminal domain) with STING1; regulates the trafficking of STING1 from the ER to the ER-Golgi intermediate compartment to elicit antiviral effects. As to expression, expressed in nociceptors.

It is found in the cell membrane. The protein localises to the nucleus inner membrane. The protein resides in the endoplasmic reticulum. Multifunctional protein involved in mechanosensation, and plays an essential role in lipid metabolism and adipocyte differentiation. May function as a potential ion channel involved in sensing mechanical stimuli. Mediates the mechanosensitivity of the PKD2-TMEM120A channel complex through direct physical interaction. TMEM120A seems to affect mechanosensation by inhibiting PIEZO2 channels, possibly by altering cellular lipid content. TMEM120A is structurally similar to a lipid-modifying enzyme, ELOVL7, and contains a bound coenzyme A molecule, which suggests it might function as an enzyme in lipid metabolism. Additionnaly, implicated in innate immune response against Zika virus. Acts as a key activator of the antiviral signaling involving STING1. This is Transmembrane protein 120A from Homo sapiens (Human).